We begin with the raw amino-acid sequence, 169 residues long: Phycobiliprotein beta chain (169 aa).

Asn72 carries the N4-methylasparagine modification. Cys82 lines the (2R,3E)-phycocyanobilin pocket.

Belongs to the phycobiliprotein family. As to quaternary structure, heterodimer of an alpha and a beta chain. In terms of processing, contains one covalently linked bilin chromophore.

It localises to the cellular thylakoid membrane. Light-harvesting photosynthetic bile pigment-protein from the phycobiliprotein complex. This is a protein functionally equivalent to, but with weaker absorbance than, allophycocyanin beta chain. The protein is Phycobiliprotein beta chain (apcD) of Mastigocladus laminosus (Fischerella sp.).